The sequence spans 124 residues: Ribonuclease pancreatic (124 aa).

A compositionally biased stretch (basic and acidic residues) spans 1–13 (KETAAEKFQRQHM). The segment at 1–21 (KETAAEKFQRQHMDTSSSLSN) is disordered. 2 residues coordinate substrate: Lys7 and Arg10. His12 (proton acceptor) is an active-site residue. 4 disulfides stabilise this stretch: Cys26/Cys84, Cys40/Cys95, Cys58/Cys110, and Cys65/Cys72. N-linked (GlcNAc...) asparagine glycosylation occurs at Asn34. Substrate is bound by residues 41–45 (KPVNT), Lys66, and Arg85. His119 serves as the catalytic Proton donor.

It belongs to the pancreatic ribonuclease family. Monomer. Interacts with and forms tight 1:1 complexes with RNH1. Dimerization of two such complexes may occur. Interaction with RNH1 inhibits this protein. Pancreas.

The protein resides in the secreted. The catalysed reaction is an [RNA] containing cytidine + H2O = an [RNA]-3'-cytidine-3'-phosphate + a 5'-hydroxy-ribonucleotide-3'-[RNA].. The enzyme catalyses an [RNA] containing uridine + H2O = an [RNA]-3'-uridine-3'-phosphate + a 5'-hydroxy-ribonucleotide-3'-[RNA].. Endonuclease that catalyzes the cleavage of RNA on the 3' side of pyrimidine nucleotides. Acts on single-stranded and double-stranded RNA. In Hippopotamus amphibius (Hippopotamus), this protein is Ribonuclease pancreatic (RNASE1).